Consider the following 363-residue polypeptide: 4-hydroxy-2-oxovalerate aldolase 1 (363 aa).

The Pyruvate carboxyltransferase domain maps to 13–265; sequence VRMTDTSLRD…KTGIDFFDIA (253 aa). Residue 21–22 participates in substrate binding; sequence RD. Residue Asp-22 participates in Mn(2+) binding. The Proton acceptor role is filled by His-25. Residues Ser-175 and His-204 each contribute to the substrate site. His-204 and His-206 together coordinate Mn(2+). Tyr-295 lines the substrate pocket.

The protein belongs to the 4-hydroxy-2-oxovalerate aldolase family.

It catalyses the reaction (S)-4-hydroxy-2-oxopentanoate = acetaldehyde + pyruvate. This chain is 4-hydroxy-2-oxovalerate aldolase 1, found in Mycobacterium sp. (strain JLS).